The chain runs to 82 residues: Exodeoxyribonuclease 7 small subunit (82 aa).

The protein belongs to the XseB family. As to quaternary structure, heterooligomer composed of large and small subunits.

The protein resides in the cytoplasm. It catalyses the reaction Exonucleolytic cleavage in either 5'- to 3'- or 3'- to 5'-direction to yield nucleoside 5'-phosphates.. Its function is as follows. Bidirectionally degrades single-stranded DNA into large acid-insoluble oligonucleotides, which are then degraded further into small acid-soluble oligonucleotides. This is Exodeoxyribonuclease 7 small subunit from Coxiella burnetii (strain CbuG_Q212) (Coxiella burnetii (strain Q212)).